Reading from the N-terminus, the 461-residue chain is Chromosomal replication initiator protein DnaA (461 aa).

Residues 1–83 (MDHSPWQRCL…LRFDVGSKPT (83 aa)) are domain I, interacts with DnaA modulators. The segment at 83 to 124 (TIDNSVTNSPVSRNTGGNESLFAKATSAPKVAEPESNIPKKT) is domain II. The segment at 125 to 341 (NVRLNYTFEN…GALNRVIANA (217 aa)) is domain III, AAA+ region. ATP contacts are provided by Gly169, Gly171, Lys172, and Thr173. Residues 342–461 (NFTGRAITID…YSNLIRTLSS (120 aa)) form a domain IV, binds dsDNA region.

Belongs to the DnaA family. As to quaternary structure, oligomerizes as a right-handed, spiral filament on DNA at oriC.

It localises to the cytoplasm. Functionally, plays an essential role in the initiation and regulation of chromosomal replication. ATP-DnaA binds to the origin of replication (oriC) to initiate formation of the DNA replication initiation complex once per cell cycle. Binds the DnaA box (a 9 base pair repeat at the origin) and separates the double-stranded (ds)DNA. Forms a right-handed helical filament on oriC DNA; dsDNA binds to the exterior of the filament while single-stranded (ss)DNA is stabiized in the filament's interior. The ATP-DnaA-oriC complex binds and stabilizes one strand of the AT-rich DNA unwinding element (DUE), permitting loading of DNA polymerase. After initiation quickly degrades to an ADP-DnaA complex that is not apt for DNA replication. Binds acidic phospholipids. In Colwellia psychrerythraea (strain 34H / ATCC BAA-681) (Vibrio psychroerythus), this protein is Chromosomal replication initiator protein DnaA.